Consider the following 464-residue polypeptide: Flavin-containing monooxygenase FMO GS-OX-like 7 (464 aa).

Position 18-23 (18-23 (GAGAAG)) interacts with FAD. Residue 214 to 219 (GSSVSG) coordinates NADP(+).

It belongs to the FMO family. FAD is required as a cofactor.

In terms of biological role, catalyzes the conversion of methylthioalkyl glucosinolates of any chain length into methylsulfinylalkyl glucosinolates. In Arabidopsis thaliana (Mouse-ear cress), this protein is Flavin-containing monooxygenase FMO GS-OX-like 7.